Consider the following 305-residue polypeptide: Mitochondrial citrate transporter D (305 aa).

Solcar repeat units follow at residues 10 to 101 (LPFG…WGAF), 111 to 197 (QTQS…VRAQ), and 211 to 298 (RNDL…VMDF). 6 consecutive transmembrane segments (helical) span residues 16–36 (FIAG…LDVV), 78–98 (SAPI…NDSW), 118–137 (LTGA…FELV), 176–196 (TLWR…QVRA), 208–228 (QQTR…TILN), and 270–291 (LYKG…LLVV).

Belongs to the mitochondrial carrier (TC 2.A.29) family.

It is found in the mitochondrion inner membrane. It catalyses the reaction citrate(in) + H(+)(in) = citrate(out) + H(+)(out). Functionally, mitochondrial transporter that mediates citrate export from mitochondria to cytoplasm. Both ctpA, ctpB, and ctpD play important roles in citric acid transport across the mitochondrial membrane and function in a redundant manner. In Aspergillus niger (strain ATCC 1015 / CBS 113.46 / FGSC A1144 / LSHB Ac4 / NCTC 3858a / NRRL 328 / USDA 3528.7), this protein is Mitochondrial citrate transporter D.